Here is a 465-residue protein sequence, read N- to C-terminus: GTPase Der (465 aa).

2 consecutive EngA-type G domains span residues 3–167 and 179–352; these read PLVA…PERS and IHIA…VSAL. GTP-binding positions include 9–16, 57–61, 119–122, 185–192, 232–236, and 297–300; these read GRPNVGKS, DTGGM, NKID, DTAGL, and NKWD. Positions 353–437 constitute a KH-like domain; it reads RQFSTSEVNK…PVRFLFREGD (85 aa).

This sequence belongs to the TRAFAC class TrmE-Era-EngA-EngB-Septin-like GTPase superfamily. EngA (Der) GTPase family. In terms of assembly, associates with the 50S ribosomal subunit.

In terms of biological role, GTPase that plays an essential role in the late steps of ribosome biogenesis. In Xylella fastidiosa (strain M12), this protein is GTPase Der.